The sequence spans 128 residues: Large ribosomal subunit protein bL20 (128 aa).

This sequence belongs to the bacterial ribosomal protein bL20 family.

Its function is as follows. Binds directly to 23S ribosomal RNA and is necessary for the in vitro assembly process of the 50S ribosomal subunit. It is not involved in the protein synthesizing functions of that subunit. This is Large ribosomal subunit protein bL20 from Kocuria rhizophila (strain ATCC 9341 / DSM 348 / NBRC 103217 / DC2201).